The sequence spans 331 residues: T-cell acute lymphocytic leukemia protein 1 (331 aa).

The segment covering 1–22 (MTERPPSEAARSDPQLEGRDAA) has biased composition (basic and acidic residues). 2 disordered regions span residues 1–27 (MTER…ASMA) and 40–86 (ETSR…EARH). Ser12 is modified (phosphoserine). A compositionally biased stretch (gly residues) spans 56–70 (ARGGPGGGPAGGGGA). Basic and acidic residues predominate over residues 72-86 (RDLKGRDAATAEARH). Phosphoserine occurs at positions 122 and 172. Residues 187–239 (VRRIFTNSRERWRQQNVNGAFAELRKLIPTHPPDKKLSKNEILRLAMKYINFL) form the bHLH domain. A disordered region spans residues 249–331 (EGTQRAKTGK…LPAADGAGPR (83 aa)). Residues 263–275 (GAGGGGGGGGGGA) are compositionally biased toward gly residues.

In terms of assembly, efficient DNA binding requires dimerization with another bHLH protein. Forms heterodimers with TCF3. Binds to the LIM domain containing protein LMO2 and to DRG1. Can assemble in a complex with LDB1 and LMO2. Component of a TAL-1 complex composed at least of CBFA2T3, LDB1, TAL1 and TCF3. Interacts with SBNO2; this interaction inhibits TAL1 occupancy of the DCSTAMP promoter, leading to the activation of the DCSTAMP promoter by the transcription factor MITF. In terms of processing, phosphorylated on serine residues. Phosphorylation of Ser-122 is strongly stimulated by hypoxia. Post-translationally, ubiquitinated; subsequent to hypoxia-dependent phosphorylation of Ser-122, ubiquitination targets the protein for rapid degradation via the ubiquitin system. This process may be characteristic for microvascular endothelial cells, since it could not be observed in large vessel endothelial cells. In terms of tissue distribution, leukemic stem cell.

It localises to the nucleus. Functionally, implicated in the genesis of hemopoietic malignancies. It may play an important role in hemopoietic differentiation. Serves as a positive regulator of erythroid differentiation. The protein is T-cell acute lymphocytic leukemia protein 1 (TAL1) of Homo sapiens (Human).